A 195-amino-acid chain; its full sequence is Guanylate kinase (195 aa).

Residues glycine 10–alanine 189 enclose the Guanylate kinase-like domain. Alanine 17–serine 24 provides a ligand contact to ATP.

Belongs to the guanylate kinase family.

The protein resides in the cytoplasm. It catalyses the reaction GMP + ATP = GDP + ADP. Its function is as follows. Essential for recycling GMP and indirectly, cGMP. The polypeptide is Guanylate kinase (Chlorobaculum tepidum (strain ATCC 49652 / DSM 12025 / NBRC 103806 / TLS) (Chlorobium tepidum)).